The chain runs to 263 residues: Endonuclease 8 (263 aa).

The active-site Schiff-base intermediate with DNA is the P2. The active-site Proton donor is E3. The active-site Proton donor; for beta-elimination activity is K53. Residues Q70, R125, and N169 each contribute to the DNA site. Residues 229–263 (KVFHRDGEACERCGGIIEKTTLSSRPFYWCAHCQK) form an FPG-type zinc finger. Residue R253 is the Proton donor; for delta-elimination activity of the active site.

Belongs to the FPG family. Zn(2+) is required as a cofactor.

It carries out the reaction 2'-deoxyribonucleotide-(2'-deoxyribose 5'-phosphate)-2'-deoxyribonucleotide-DNA = a 3'-end 2'-deoxyribonucleotide-(2,3-dehydro-2,3-deoxyribose 5'-phosphate)-DNA + a 5'-end 5'-phospho-2'-deoxyribonucleoside-DNA + H(+). In terms of biological role, involved in base excision repair of DNA damaged by oxidation or by mutagenic agents. Acts as a DNA glycosylase that recognizes and removes damaged bases. Has a preference for oxidized pyrimidines, such as thymine glycol, 5,6-dihydrouracil and 5,6-dihydrothymine. Has AP (apurinic/apyrimidinic) lyase activity and introduces nicks in the DNA strand. Cleaves the DNA backbone by beta-delta elimination to generate a single-strand break at the site of the removed base with both 3'- and 5'-phosphates. The sequence is that of Endonuclease 8 from Salmonella typhi.